Here is a 308-residue protein sequence, read N- to C-terminus: Extended-spectrum beta-lactamase PER-1 (308 aa).

Residues 1 to 26 (MNVIIKAVVTASTLLMVSFSSFETSA) form the signal peptide. Ser71 acts as the Nucleophile; acyl-ester intermediate in catalysis. Lys74, Ser135, and Glu171 together coordinate a beta-lactam.

This sequence belongs to the class-A beta-lactamase family. As to quaternary structure, monomer.

The protein localises to the secreted. It catalyses the reaction a beta-lactam + H2O = a substituted beta-amino acid. Inhibited by the beta-lactamase-blocking agents clavulanic acid, tazobactam and sulbactam. Not inhibited by EDTA. In terms of biological role, extended-spectrum beta-lactamase (ESBL) which confers resistance to penicillins, as well as first-, second- and third-generation cephalosporins, but not the carbapenem, imipenem, in the JM109 strain of E.coli. Has cefotaxime-hydrolyzing activity. The polypeptide is Extended-spectrum beta-lactamase PER-1 (Pseudomonas aeruginosa).